Reading from the N-terminus, the 376-residue chain is Phosphate acyltransferase (376 aa).

The interval 334–376 is disordered; it reads AGSLEQAKRDAGGPGSASQMASPIAGPVSGQPAEPYSAQSSKA.

The protein belongs to the PlsX family. In terms of assembly, homodimer. Probably interacts with PlsY.

It is found in the cytoplasm. It catalyses the reaction a fatty acyl-[ACP] + phosphate = an acyl phosphate + holo-[ACP]. Its pathway is lipid metabolism; phospholipid metabolism. Its function is as follows. Catalyzes the reversible formation of acyl-phosphate (acyl-PO(4)) from acyl-[acyl-carrier-protein] (acyl-ACP). This enzyme utilizes acyl-ACP as fatty acyl donor, but not acyl-CoA. This chain is Phosphate acyltransferase, found in Paraburkholderia phymatum (strain DSM 17167 / CIP 108236 / LMG 21445 / STM815) (Burkholderia phymatum).